The primary structure comprises 328 residues: Glycerol-3-phosphate dehydrogenase [NAD(P)+] (328 aa).

3 residues coordinate NADPH: tryptophan 15, arginine 35, and lysine 108. 3 residues coordinate sn-glycerol 3-phosphate: lysine 108, glycine 136, and serine 138. Alanine 140 lines the NADPH pocket. Sn-glycerol 3-phosphate contacts are provided by lysine 191, aspartate 244, serine 254, arginine 255, and asparagine 256. The Proton acceptor role is filled by lysine 191. Arginine 255 contributes to the NADPH binding site. Positions 275 and 277 each coordinate NADPH.

It belongs to the NAD-dependent glycerol-3-phosphate dehydrogenase family.

Its subcellular location is the cytoplasm. The enzyme catalyses sn-glycerol 3-phosphate + NAD(+) = dihydroxyacetone phosphate + NADH + H(+). The catalysed reaction is sn-glycerol 3-phosphate + NADP(+) = dihydroxyacetone phosphate + NADPH + H(+). It participates in membrane lipid metabolism; glycerophospholipid metabolism. Functionally, catalyzes the reduction of the glycolytic intermediate dihydroxyacetone phosphate (DHAP) to sn-glycerol 3-phosphate (G3P), the key precursor for phospholipid synthesis. The protein is Glycerol-3-phosphate dehydrogenase [NAD(P)+] of Azorhizobium caulinodans (strain ATCC 43989 / DSM 5975 / JCM 20966 / LMG 6465 / NBRC 14845 / NCIMB 13405 / ORS 571).